Consider the following 289-residue polypeptide: Enoyl-CoA delta isomerase 1, mitochondrial (289 aa).

Residues 1–28 constitute a mitochondrion transit peptide; the sequence is MALAAARRLLLHAGSRLGRREAVDGARR. Position 48 is an N6-acetyllysine; alternate (Lys48). Lys48 is modified (N6-succinyllysine; alternate). At Lys71 the chain carries N6-succinyllysine. Position 76 is an N6-acetyllysine (Lys76). Residues 93–97, Gly140, and Asn164 each bind substrate; that span reads AGLDL. N6-acetyllysine; alternate is present on residues Lys222, Lys229, Lys255, and Lys270. N6-succinyllysine; alternate is present on residues Lys222, Lys229, Lys255, and Lys270. Lys275 is modified (N6-succinyllysine). Lys283 carries the post-translational modification N6-acetyllysine; alternate. Position 283 is an N6-succinyllysine; alternate (Lys283).

The protein belongs to the enoyl-CoA hydratase/isomerase family. As to quaternary structure, homotrimer.

It localises to the mitochondrion matrix. It carries out the reaction a (3Z)-enoyl-CoA = a 4-saturated (2E)-enoyl-CoA. The catalysed reaction is a (3E)-enoyl-CoA = a 4-saturated (2E)-enoyl-CoA. The enzyme catalyses (3Z)-octenoyl-CoA = (2E)-octenoyl-CoA. It catalyses the reaction (2E)-tetradecenoyl-CoA = (3Z)-tetradecenoyl-CoA. It carries out the reaction (3Z)-dodecenoyl-CoA = (2E)-dodecenoyl-CoA. The catalysed reaction is (3Z)-hexenoyl-CoA = (2E)-hexenoyl-CoA. The enzyme catalyses (3Z)-decenoyl-CoA = (2E)-decenoyl-CoA. Its pathway is lipid metabolism; fatty acid beta-oxidation. Functionally, key enzyme of fatty acid beta-oxidation. Able to isomerize both 3-cis (3Z) and 3-trans (3E) double bonds into the 2-trans (2E) form in a range of enoyl-CoA species, with a preference for (3Z)-enoyl-CoAs over (3E)-enoyl-CoAs. The catalytic efficiency of this enzyme is not affected by the fatty acyl chain length. In Mus musculus (Mouse), this protein is Enoyl-CoA delta isomerase 1, mitochondrial.